The chain runs to 165 residues: Cyclic pyranopterin monophosphate synthase (165 aa).

Substrate is bound by residues 78–80 and 116–117; these read LCH and ME. Asp-131 is an active-site residue.

Belongs to the MoaC family. In terms of assembly, homohexamer; trimer of dimers.

The catalysed reaction is (8S)-3',8-cyclo-7,8-dihydroguanosine 5'-triphosphate = cyclic pyranopterin phosphate + diphosphate. The protein operates within cofactor biosynthesis; molybdopterin biosynthesis. Functionally, catalyzes the conversion of (8S)-3',8-cyclo-7,8-dihydroguanosine 5'-triphosphate to cyclic pyranopterin monophosphate (cPMP). The chain is Cyclic pyranopterin monophosphate synthase from Sinorhizobium fredii (strain NBRC 101917 / NGR234).